A 328-amino-acid chain; its full sequence is MDSKVFDVTIIGAGPTGLFTAFYGGMREASVKIIESLPHIGGQLTALYPEKYIYDIAGFPKVHAQELIDRLEEQAKFFDPEIVLGQAIDKVERLEDETIRLTSNTGEVHLTKTIIITAGNGAFQPRRLNIGNSEAFEGKNLHYYVRDMNQYKGKRVVLLGGGDSAVDWALMLEKIAAKVTLVHRRDQFRAHEHSVNQLKESSVEILTPYAPINVEASDKIEKIQLQEVKGEKIIDVEVDDIICNYGFISSLGPIKDWGLEIEKNSIVVNSKMETNIPGVYAAGDVCTYDGKVKLIATGFGEGPTAINNAKNYIDPKARIQPKHSTAMF.

Residues T16, E35, Q43, Y48, I88, F123, D284, and T325 each coordinate FAD.

This sequence belongs to the ferredoxin--NADP reductase type 2 family. Homodimer. FAD serves as cofactor.

The enzyme catalyses 2 reduced [2Fe-2S]-[ferredoxin] + NADP(+) + H(+) = 2 oxidized [2Fe-2S]-[ferredoxin] + NADPH. This is Ferredoxin--NADP reductase 2 from Oceanobacillus iheyensis (strain DSM 14371 / CIP 107618 / JCM 11309 / KCTC 3954 / HTE831).